Reading from the N-terminus, the 243-residue chain is Carboxy-S-adenosyl-L-methionine synthase (243 aa).

S-adenosyl-L-methionine contacts are provided by residues tyrosine 40, 65-67 (GCS), 90-91 (DN), 118-119 (DI), asparagine 133, and arginine 200.

The protein belongs to the class I-like SAM-binding methyltransferase superfamily. Cx-SAM synthase family. Homodimer.

It catalyses the reaction prephenate + S-adenosyl-L-methionine = carboxy-S-adenosyl-L-methionine + 3-phenylpyruvate + H2O. Functionally, catalyzes the conversion of S-adenosyl-L-methionine (SAM) to carboxy-S-adenosyl-L-methionine (Cx-SAM). This is Carboxy-S-adenosyl-L-methionine synthase from Shewanella sp. (strain MR-7).